The sequence spans 246 residues: Proteasome subunit alpha type-6 (246 aa).

Belongs to the peptidase T1A family. As to quaternary structure, the 26S proteasome consists of a 20S proteasome core and two 19S regulatory subunits. The 20S proteasome core is composed of 28 subunits that are arranged in four stacked rings, resulting in a barrel-shaped structure. The two end rings are each formed by seven alpha subunits, and the two central rings are each formed by seven beta subunits. The catalytic chamber with the active sites is on the inside of the barrel.

The protein localises to the cytoplasm. It is found in the nucleus. In terms of biological role, the proteasome is a multicatalytic proteinase complex which is characterized by its ability to cleave peptides with Arg, Phe, Tyr, Leu, and Glu adjacent to the leaving group at neutral or slightly basic pH. The proteasome has an ATP-dependent proteolytic activity. In Oryza sativa subsp. japonica (Rice), this protein is Proteasome subunit alpha type-6 (PAA1).